The sequence spans 424 residues: Protein FAM43A (424 aa).

The segment covering 261–297 (QQEEELQEEEEEHLEDCLEEEEEEDGVGDGDPAEEEA) has biased composition (acidic residues). Disordered stretches follow at residues 261-299 (QQEE…EAEA) and 382-424 (LLSG…PYSG). Low complexity predominate over residues 382–394 (LLSGESTGSESSI). Polar residues predominate over residues 405-418 (SPGNPSGPADSTSL).

Belongs to the FAM43 family.

This chain is Protein FAM43A (Fam43a), found in Mus musculus (Mouse).